A 119-amino-acid polypeptide reads, in one-letter code: Protein TusC (119 aa).

The protein belongs to the DsrF/TusC family. In terms of assembly, heterohexamer, formed by a dimer of trimers. The hexameric TusBCD complex contains 2 copies each of TusB, TusC and TusD. The TusBCD complex interacts with TusE.

Its subcellular location is the cytoplasm. Part of a sulfur-relay system required for 2-thiolation of 5-methylaminomethyl-2-thiouridine (mnm(5)s(2)U) at tRNA wobble positions. The polypeptide is Protein TusC (Cronobacter sakazakii (strain ATCC BAA-894) (Enterobacter sakazakii)).